Consider the following 357-residue polypeptide: Phosphoribosylformylglycinamidine cyclo-ligase (357 aa).

Belongs to the AIR synthase family.

The protein resides in the cytoplasm. It carries out the reaction 2-formamido-N(1)-(5-O-phospho-beta-D-ribosyl)acetamidine + ATP = 5-amino-1-(5-phospho-beta-D-ribosyl)imidazole + ADP + phosphate + H(+). It functions in the pathway purine metabolism; IMP biosynthesis via de novo pathway; 5-amino-1-(5-phospho-D-ribosyl)imidazole from N(2)-formyl-N(1)-(5-phospho-D-ribosyl)glycinamide: step 2/2. In Rhizobium etli (strain CIAT 652), this protein is Phosphoribosylformylglycinamidine cyclo-ligase.